Consider the following 194-residue polypeptide: E3 ubiquitin-protein ligase RNF185 (194 aa).

Residues 1-27 (MASAAASESSSSSSSSSAGAANGQSAG) are compositionally biased toward low complexity. The segment at 1 to 32 (MASAAASESSSSSSSSSAGAANGQSAGESGGG) is disordered. Residues 31–82 (GGGAQDSTFECNICLDTSKDAVISLCGHLFCWPCLHQWLETRPNRQVCPVCK) are required for ubiquitin ligase activity and protection against ER stress-induced cell death. An RING-type zinc finger spans residues 41–82 (CNICLDTSKDAVISLCGHLFCWPCLHQWLETRPNRQVCPVCK). The tract at residues 92 to 126 (PLYGRGSTGQQDPREKTPPRPQGQRPEPENRGGFQ) is disordered. 2 consecutive transmembrane segments (helical) span residues 133-153 (GGFQ…ATAF) and 174-194 (QFLS…LLIA).

It is found in the mitochondrion outer membrane. Its subcellular location is the endoplasmic reticulum membrane. It carries out the reaction S-ubiquitinyl-[E2 ubiquitin-conjugating enzyme]-L-cysteine + [acceptor protein]-L-lysine = [E2 ubiquitin-conjugating enzyme]-L-cysteine + N(6)-ubiquitinyl-[acceptor protein]-L-lysine.. It participates in protein modification; protein ubiquitination. Its function is as follows. E3 ubiquitin-protein ligase that regulates selective mitochondrial autophagy by mediating 'Lys-63'-linked polyubiquitination. Acts in the endoplasmic reticulum (ER)-associated degradation (ERAD) pathway, which targets misfolded proteins that accumulate in the endoplasmic reticulum (ER) for ubiquitination and subsequent proteasome-mediated degradation. Protects cells from ER stress-induced apoptosis. Responsible for the cotranslational ubiquitination and degradation of CFTR in the ERAD pathway. Also acts as a regulator of the innate antiviral response by catalyzing 'Lys-27'-linked polyubiquitination of CGAS, thereby promoting CGAS cyclic GMP-AMP synthase activity. Preferentially associates with the E2 enzymes UBE2J1 and UBE2J2. The sequence is that of E3 ubiquitin-protein ligase RNF185 (rnf185) from Danio rerio (Zebrafish).